We begin with the raw amino-acid sequence, 323 residues long: MDSDASLVSSRPSSPEPDDLFLPARSKGSSGSAFTGGTVSSSTPSDCPPELSAELRGAMGSAGAHPGDKLGGSGFKSSSSSTSSSTSSAAASSTKKDKKQMTEPELQQLRLKINSRERKRMHDLNIAMDGLREVMPYAHGPSVRKLSKIATLLLARNYILMLTNSLEEMKRLVSEIYGGHHAGFHPSACGGLAHSAPLPAATAHPAAAAHAAHHPAVHHPILPPAAAAAAAAAAAAAVSSASLPGSGLPSVGSIRPPHGLLKSPSAAAAAPLGGGGGGSGASGGFQHWGGMPCPCSMCQVPPPHHHVSAMGAGSLPRLTSDAK.

Polar residues-rich tracts occupy residues 1–13 (MDSD…SRPS) and 27–45 (KGSS…STPS). The interval 1–107 (MDSDASLVSS…KKQMTEPELQ (107 aa)) is disordered. The segment covering 76–93 (KSSSSSTSSSTSSAAASS) has biased composition (low complexity). The region spanning 108–162 (QLRLKINSRERKRMHDLNIAMDGLREVMPYAHGPSVRKLSKIATLLLARNYILML) is the bHLH domain.

In terms of assembly, interacts with NKX2-2. Interacts with ZNF488. In terms of tissue distribution, expressed in the brain, in oligodendrocytes. Strongly expressed in oligodendrogliomas, while expression is weak to moderate in astrocytomas. Expression in glioblastomas highly variable.

The protein resides in the nucleus. It is found in the cytoplasm. Required for oligodendrocyte and motor neuron specification in the spinal cord, as well as for the development of somatic motor neurons in the hindbrain. Functions together with ZNF488 to promote oligodendrocyte differentiation. Cooperates with OLIG1 to establish the pMN domain of the embryonic neural tube. Antagonist of V2 interneuron and of NKX2-2-induced V3 interneuron development. This Homo sapiens (Human) protein is Oligodendrocyte transcription factor 2 (OLIG2).